Consider the following 448-residue polypeptide: High mobility group B protein 15 (448 aa).

The ARID domain maps to 29-120; sequence VADPRLFMTS…LLNNYEQIYF (92 aa). Polar residues predominate over residues 219 to 236; that stretch reads PQQSHGVLPNTLNISANP. Disordered regions lie at residues 219-270, 333-352, and 366-448; these read PQQS…RSGY, KKNGQLISNAVPLQQRLPEQ, and VEED…AEQN. Positions 244–255 are enriched in basic residues; sequence TKRRRRRKKSEI. The segment at residues 263 to 330 is a DNA-binding region (HMG box); that stretch reads PKPNRSGYNF…RYRTEMEDYR (68 aa). Acidic residues predominate over residues 389 to 398; sequence SIETDPELEE. A compositionally biased stretch (low complexity) spans 399–412; that stretch reads PSLNPSGPNLNPNP.

Belongs to the HMGB family.

The protein localises to the nucleus. In terms of biological role, binds preferentially DNA with A/T-rich content. The sequence is that of High mobility group B protein 15 (HMGB15) from Arabidopsis thaliana (Mouse-ear cress).